The sequence spans 358 residues: Phosphoribosylformylglycinamidine cyclo-ligase (358 aa).

The protein belongs to the AIR synthase family.

It is found in the cytoplasm. The catalysed reaction is 2-formamido-N(1)-(5-O-phospho-beta-D-ribosyl)acetamidine + ATP = 5-amino-1-(5-phospho-beta-D-ribosyl)imidazole + ADP + phosphate + H(+). Its pathway is purine metabolism; IMP biosynthesis via de novo pathway; 5-amino-1-(5-phospho-D-ribosyl)imidazole from N(2)-formyl-N(1)-(5-phospho-D-ribosyl)glycinamide: step 2/2. The polypeptide is Phosphoribosylformylglycinamidine cyclo-ligase (Nitrosococcus oceani (strain ATCC 19707 / BCRC 17464 / JCM 30415 / NCIMB 11848 / C-107)).